The chain runs to 148 residues: Large ribosomal subunit protein bL9 (148 aa).

It belongs to the bacterial ribosomal protein bL9 family.

Functionally, binds to the 23S rRNA. The polypeptide is Large ribosomal subunit protein bL9 (Coprothermobacter proteolyticus (strain ATCC 35245 / DSM 5265 / OCM 4 / BT)).